Consider the following 220-residue polypeptide: Pyridoxine/pyridoxamine 5'-phosphate oxidase (220 aa).

Substrate-binding positions include 8–11 (RKSY) and lysine 66. Residues 61 to 66 (RVVLIK), 76 to 77 (FT), arginine 82, and lysine 83 contribute to the FMN site. Residues tyrosine 123, arginine 127, and serine 131 each contribute to the substrate site. Residues 140 to 141 (QS) and tryptophan 184 contribute to the FMN site. 190–192 (RLH) is a binding site for substrate. Arginine 194 is a binding site for FMN.

This sequence belongs to the pyridoxamine 5'-phosphate oxidase family. In terms of assembly, homodimer. FMN is required as a cofactor.

It catalyses the reaction pyridoxamine 5'-phosphate + O2 + H2O = pyridoxal 5'-phosphate + H2O2 + NH4(+). The enzyme catalyses pyridoxine 5'-phosphate + O2 = pyridoxal 5'-phosphate + H2O2. It participates in cofactor metabolism; pyridoxal 5'-phosphate salvage; pyridoxal 5'-phosphate from pyridoxamine 5'-phosphate: step 1/1. The protein operates within cofactor metabolism; pyridoxal 5'-phosphate salvage; pyridoxal 5'-phosphate from pyridoxine 5'-phosphate: step 1/1. Catalyzes the oxidation of either pyridoxine 5'-phosphate (PNP) or pyridoxamine 5'-phosphate (PMP) into pyridoxal 5'-phosphate (PLP). This is Pyridoxine/pyridoxamine 5'-phosphate oxidase from Albidiferax ferrireducens (strain ATCC BAA-621 / DSM 15236 / T118) (Rhodoferax ferrireducens).